We begin with the raw amino-acid sequence, 265 residues long: Energy-coupling factor transporter transmembrane protein EcfT (265 aa).

5 helical membrane-spanning segments follow: residues 29–49 (IILF…AILI), 73–93 (VWIL…GGTV), 110–130 (AIFI…LTLT), 143–163 (LLGP…MMSI), and 242–262 (FTWR…VIGW).

This sequence belongs to the energy-coupling factor EcfT family. As to quaternary structure, forms a stable energy-coupling factor (ECF) transporter complex composed of 2 membrane-embedded substrate-binding proteins (S component), 2 ATP-binding proteins (A component) and 2 transmembrane proteins (T component). May be able to interact with more than 1 S component at a time.

It is found in the cell membrane. In terms of biological role, transmembrane (T) component of an energy-coupling factor (ECF) ABC-transporter complex. Unlike classic ABC transporters this ECF transporter provides the energy necessary to transport a number of different substrates. The chain is Energy-coupling factor transporter transmembrane protein EcfT from Brevibacillus brevis (strain 47 / JCM 6285 / NBRC 100599).